Here is a 177-residue protein sequence, read N- to C-terminus: ATP synthase subunit b (177 aa).

The chain crosses the membrane as a helical span at residues 15 to 35 (GISGGTIIYQLLMFIILLALL).

This sequence belongs to the ATPase B chain family. In terms of assembly, F-type ATPases have 2 components, F(1) - the catalytic core - and F(0) - the membrane proton channel. F(1) has five subunits: alpha(3), beta(3), gamma(1), delta(1), epsilon(1). F(0) has three main subunits: a(1), b(2) and c(10-14). The alpha and beta chains form an alternating ring which encloses part of the gamma chain. F(1) is attached to F(0) by a central stalk formed by the gamma and epsilon chains, while a peripheral stalk is formed by the delta and b chains.

It is found in the cell membrane. F(1)F(0) ATP synthase produces ATP from ADP in the presence of a proton or sodium gradient. F-type ATPases consist of two structural domains, F(1) containing the extramembraneous catalytic core and F(0) containing the membrane proton channel, linked together by a central stalk and a peripheral stalk. During catalysis, ATP synthesis in the catalytic domain of F(1) is coupled via a rotary mechanism of the central stalk subunits to proton translocation. Functionally, component of the F(0) channel, it forms part of the peripheral stalk, linking F(1) to F(0). The polypeptide is ATP synthase subunit b (Geobacillus kaustophilus (strain HTA426)).